The chain runs to 64 residues: Ferredoxin-2 (64 aa).

Residues 2–29 (RIHVDQDKCCGAGSCVLAAPDVFDQREE) form the 4Fe-4S ferredoxin-type domain. [3Fe-4S] cluster is bound by residues Cys10, Cys16, and Cys55.

It depends on [3Fe-4S] cluster as a cofactor.

Electron transport protein for the cytochrome P-450-SU2 system. The sequence is that of Ferredoxin-2 (subB) from Streptomyces griseolus.